Consider the following 428-residue polypeptide: Enolase (428 aa).

Gln163 is a (2R)-2-phosphoglycerate binding site. The active-site Proton donor is Glu205. Mg(2+)-binding residues include Asp242, Glu286, and Asp313. Residues Lys338, Arg367, Ser368, and Lys389 each contribute to the (2R)-2-phosphoglycerate site. The Proton acceptor role is filled by Lys338.

The protein belongs to the enolase family. Mg(2+) serves as cofactor.

The protein resides in the cytoplasm. It localises to the secreted. Its subcellular location is the cell surface. It catalyses the reaction (2R)-2-phosphoglycerate = phosphoenolpyruvate + H2O. It participates in carbohydrate degradation; glycolysis; pyruvate from D-glyceraldehyde 3-phosphate: step 4/5. Functionally, catalyzes the reversible conversion of 2-phosphoglycerate (2-PG) into phosphoenolpyruvate (PEP). It is essential for the degradation of carbohydrates via glycolysis. The polypeptide is Enolase (Verminephrobacter eiseniae (strain EF01-2)).